Reading from the N-terminus, the 265-residue chain is MEMO1 family protein Mbar_A1422 (265 aa).

Belongs to the MEMO1 family.

This chain is MEMO1 family protein Mbar_A1422, found in Methanosarcina barkeri (strain Fusaro / DSM 804).